Consider the following 133-residue polypeptide: Small ribosomal subunit protein uS8 (133 aa).

It belongs to the universal ribosomal protein uS8 family. Part of the 30S ribosomal subunit. Contacts proteins S5 and S12.

Its function is as follows. One of the primary rRNA binding proteins, it binds directly to 16S rRNA central domain where it helps coordinate assembly of the platform of the 30S subunit. The protein is Small ribosomal subunit protein uS8 of Rhodopirellula baltica (strain DSM 10527 / NCIMB 13988 / SH1).